The sequence spans 304 residues: DCN1-like protein 3 (304 aa).

2 disordered regions span residues Met-1–Ser-87 and Glu-284–Thr-304. The N-myristoyl glycine moiety is linked to residue Gly-2. The 193-residue stretch at Ser-86 to Met-278 folds into the DCUN1 domain.

Part of a complex containing DCUN1D3, CUL3 and RBX1. Interacts (via the DCUN1 domain) with the unneddylated cullins: interacts with CUL1, CUL2, CUL3, CUL4A, CUL4B and CUL5; these interactions promote the cullin neddylation and the identity of the cullin dictates the affinity of the interaction. Interacts preferentially with CUL3; this interaction triggers the relocalization of CUL3 to the cell membrane where CUL3 is neddylated. Interacts (via DCUN1 domain) with RBX1. May also interact with regulators or subunits of cullin-RING ligases such as RNF7, ELOB and DDB1; these interactions are bridged by cullins. Interacts (via DCUN1 domain) with CAND1; this interaction is bridged by cullins and strongly inhibits cullin neddylation. These CAND-cullin-DCNL complexes can only be neddylated in the presence of a substrate adapter. Interacts (via DCUN1 domain) with the N-terminally acetylated form of UBE2M and UBE2F.

It localises to the cell membrane. Its subcellular location is the cytoplasm. The protein localises to the nucleus. It is found in the perinuclear region. In terms of biological role, contributes to the neddylation of all cullins by transferring NEDD8 from N-terminally acetylated NEDD8-conjugating E2s enzyme to different cullin C-terminal domain-RBX complexes and may play a role in the cell cycle progression by regulating the SCF ubiquitin E3 ligase complex, after UV damage. At the cell membrane, can promote and as well inhibit cullins neddylation. In Bos taurus (Bovine), this protein is DCN1-like protein 3.